Here is a 170-residue protein sequence, read N- to C-terminus: NADH-quinone oxidoreductase subunit B (170 aa).

Cys37, Cys38, Cys102, and Cys131 together coordinate [4Fe-4S] cluster.

This sequence belongs to the complex I 20 kDa subunit family. NDH-1 is composed of 14 different subunits. Subunits NuoB, C, D, E, F, and G constitute the peripheral sector of the complex. [4Fe-4S] cluster is required as a cofactor.

It localises to the cell inner membrane. The enzyme catalyses a quinone + NADH + 5 H(+)(in) = a quinol + NAD(+) + 4 H(+)(out). NDH-1 shuttles electrons from NADH, via FMN and iron-sulfur (Fe-S) centers, to quinones in the respiratory chain. The immediate electron acceptor for the enzyme in this species is believed to be ubiquinone. Couples the redox reaction to proton translocation (for every two electrons transferred, four hydrogen ions are translocated across the cytoplasmic membrane), and thus conserves the redox energy in a proton gradient. This is NADH-quinone oxidoreductase subunit B from Citrifermentans bemidjiense (strain ATCC BAA-1014 / DSM 16622 / JCM 12645 / Bem) (Geobacter bemidjiensis).